Reading from the N-terminus, the 343-residue chain is F17e-G fimbrial adhesin (343 aa).

The signal sequence occupies residues 1 to 22 (MTNFYKVFLAVFILVCCNISHA). The segment at 23-199 (AVSFIGSTEN…LNPFTLNDTV (177 aa)) is receptor-binding lectin domain. A carbohydrate is bound by residues 65-66 (AN), 110-111 (DT), and 138-141 (STQG). Residues C75 and C132 are joined by a disulfide bond. Residues 200-343 (TSCRLLTPSA…GISTFTFSYQ (144 aa)) are fimbrillin-binding domain. A disordered region spans residues 287-307 (LKFGPDSPVKGNENQWQLSTG). Positions 298–307 (NENQWQLSTG) are enriched in polar residues.

This sequence belongs to the fimbrial protein family.

It localises to the fimbrium. In terms of biological role, essential fimbrial adhesion factor that mediates binding to N-acetylglucosamine-containing receptors in the host intestinal microvilli, leading to colonization of the intestinal tissue, and diarrhea or septicemia. Also confers adhesiveness to laminin and basement membranes. In Escherichia coli, this protein is F17e-G fimbrial adhesin (f17eG).